Reading from the N-terminus, the 112-residue chain is uncharacterized protein (112 aa).

The disordered stretch occupies residues 1–27 (MIASIGDSAEPPLRRTRRAQQQDRPPT).

This is an uncharacterized protein from Orgyia pseudotsugata multicapsid polyhedrosis virus (OpMNPV).